The sequence spans 602 residues: Elongation factor 4 (602 aa).

The 183-residue stretch at 8–190 (DLIRNFSIVA…AIVHRLPPPK (183 aa)) folds into the tr-type G domain. Residues 20–25 (DHGKST) and 137–140 (NKID) contribute to the GTP site.

The protein belongs to the TRAFAC class translation factor GTPase superfamily. Classic translation factor GTPase family. LepA subfamily.

The protein localises to the cell inner membrane. It catalyses the reaction GTP + H2O = GDP + phosphate + H(+). Required for accurate and efficient protein synthesis under certain stress conditions. May act as a fidelity factor of the translation reaction, by catalyzing a one-codon backward translocation of tRNAs on improperly translocated ribosomes. Back-translocation proceeds from a post-translocation (POST) complex to a pre-translocation (PRE) complex, thus giving elongation factor G a second chance to translocate the tRNAs correctly. Binds to ribosomes in a GTP-dependent manner. This chain is Elongation factor 4, found in Cereibacter sphaeroides (strain KD131 / KCTC 12085) (Rhodobacter sphaeroides).